We begin with the raw amino-acid sequence, 252 residues long: MTDRLKGKVAIVTGGTLGIGLAIADKFVEEGAKVVITGRHADVGEKAAKSIGGTDVIRFVQHDASDEAGWTKLFDTTEEAFGPVTTVVNNAGIAVSKSVEDTTTEEWRKLLSVNLDGVFFGTRLGIQRMKNKGLGASIINMSSIEGFVGDPTLGAYNASKGAVRIMSKSAALDCALKDYDVRVNTVHPGYIKTPLVDDLEGAEEMMSQRTKTPMGHIGEPNDIAWICVYLASDESKFATGAEFVVDGGYTAQ.

Residues 16–19, 39–40, 63–64, Asn-90, Tyr-156, Lys-160, and 191–195 each bind NADP(+); these read TLGI, RH, DA, and IKTPL. Tyr-156 functions as the Proton donor/acceptor in the catalytic mechanism. Gln-252 is a binding site for Mg(2+).

Belongs to the short-chain dehydrogenases/reductases (SDR) family. Homotetramer. It depends on Mg(2+) as a cofactor.

It catalyses the reaction a secondary alcohol + NADP(+) = a ketone + NADPH + H(+). The enzyme catalyses acetophenone + NADPH + H(+) = (R)-1-phenylethanol + NADP(+). It carries out the reaction 2,5-hexanedione + 2 NADPH + 2 H(+) = (2R,5R)-hexanediol + 2 NADP(+). The catalysed reaction is ethyl 3-oxobutanoate + NADPH + H(+) = ethyl (R)-3-hydroxybutanoate + NADP(+). It catalyses the reaction 2-octanone + NADPH + H(+) = (2R)-octan-2-ol + NADP(+). Its function is as follows. NADP-dependent (R)-specific alcohol dehydrogenase (ADH) with a broad substrate specificity, able to catalyze in vitro the stereoselective reduction of several aliphatic and aromatic ketones as well as beta-keto esters to the corresponding enantiomerically pure alcohols. This is NADP-dependent (R)-specific alcohol dehydrogenase from Lentilactobacillus kefiri (Lactobacillus kefiri).